A 74-amino-acid chain; its full sequence is Putative membrane protein insertion efficiency factor (74 aa).

It belongs to the UPF0161 family.

It localises to the cell inner membrane. Functionally, could be involved in insertion of integral membrane proteins into the membrane. This chain is Putative membrane protein insertion efficiency factor, found in Leptospira interrogans serogroup Icterohaemorrhagiae serovar copenhageni (strain Fiocruz L1-130).